The following is a 457-amino-acid chain: BAG family molecular chaperone regulator 4 (457 aa).

The segment covering 1 to 20 (MSALRRSGYGPSDGPSYGRY) has biased composition (low complexity). The disordered stretch occupies residues 1 to 104 (MSALRRSGYG…PYPGYNSNYW (104 aa)). Residue Ser7 is modified to Phosphoserine. Pro residues predominate over residues 31 to 48 (HVPPPLYPPLRPEPPQPP). 4 positions are modified to omega-N-methylarginine: Arg41, Arg54, Arg108, and Arg185. 2 disordered regions span residues 128-335 (LNSY…SDLL) and 348-374 (YGNA…SSDE). Polar residues predominate over residues 160–193 (YTQSNYSTEVPNTYRSPGNSPTPMSRWMYSQQDC). A compositionally biased stretch (low complexity) spans 255–268 (PWPSAAPSAPSAGS). Pro residues predominate over residues 284–295 (PQPPPSPPPQQP). Composition is skewed to polar residues over residues 326–335 (AVNNDNSDLL) and 348–365 (YGNA…SNNL). The 78-residue stretch at 379-456 (SIKKIIHVLE…AILEKLEKKG (78 aa)) folds into the BAG domain.

As to quaternary structure, binds to the ATPase domain of HSP/HSC70 chaperones. Binds to the death domain of TNFRSF12. Binds to the death domain of TNFRSF1A in the absence of TNF and thereby prevents binding of adapter molecules such as TRADD or TRAF2. Interacts with PRKN.

The protein resides in the cytoplasm. Inhibits the chaperone activity of HSP70/HSC70 by promoting substrate release. Prevents constitutive TNFRSF1A signaling. Negative regulator of PRKN translocation to damaged mitochondria. In Mus musculus (Mouse), this protein is BAG family molecular chaperone regulator 4 (Bag4).